A 365-amino-acid chain; its full sequence is MAQTLTILGLESSCDDTAAAVVRQTEGQAAEILSSVVHGQADLHSAYGGVVPEIAARAHAEKLDICVRQALTEAGVSLTDLDAVAVTAGPGLIGGVMSGVMCAKGIAAATGLPLIGVNHLAGHALTPRLTDQIAYPYLMLLVSGGHCQYLIAHGPEQFSRLGGTIDDAPGEAFDKTARLLGLPQPGGPSVEGEARQGDPKRFRFPRPLLDRPDCDLSFSGLKTALMRMRDQLVGEKGGLTRQDRADLCAGFQAAVVDTLAEKTRRALTLYLDEAPAEPVVAVAGGVAANAAIRAALETVCAEAGARFTAPPLRLCTDNAAMIAYAGLERFRSGARDGLDLTARPRWPLDQSSPAMLGSGKKGAKA.

Fe cation-binding residues include H119 and H123. Residues 141 to 145 (LVSGG), D174, and G187 contribute to the substrate site. Positions 184–203 (QPGGPSVEGEARQGDPKRFR) are disordered. A compositionally biased stretch (basic and acidic residues) spans 192–201 (GEARQGDPKR). Residue N289 participates in substrate binding. Position 317 (D317) interacts with Fe cation. Positions 342-365 (ARPRWPLDQSSPAMLGSGKKGAKA) are disordered.

This sequence belongs to the KAE1 / TsaD family. It depends on Fe(2+) as a cofactor.

It localises to the cytoplasm. It carries out the reaction L-threonylcarbamoyladenylate + adenosine(37) in tRNA = N(6)-L-threonylcarbamoyladenosine(37) in tRNA + AMP + H(+). Required for the formation of a threonylcarbamoyl group on adenosine at position 37 (t(6)A37) in tRNAs that read codons beginning with adenine. Is involved in the transfer of the threonylcarbamoyl moiety of threonylcarbamoyl-AMP (TC-AMP) to the N6 group of A37, together with TsaE and TsaB. TsaD likely plays a direct catalytic role in this reaction. This Ruegeria pomeroyi (strain ATCC 700808 / DSM 15171 / DSS-3) (Silicibacter pomeroyi) protein is tRNA N6-adenosine threonylcarbamoyltransferase.